The chain runs to 520 residues: MVSVPTGLRPSAVPGVRLPALADQVGAVMAGPDRRAAVPDVTVTGVTLRAQDVLPGDLFAALPGATTHGARHAAEAIERGAVAVLTDAAGVAQLTGGRTTPTLLHPRPRSVLGELAAAVYAHPSERLTVIGITGTSGKTTTTYLVESGLRAAGRTAGLIGTVGIRIDGADIPSALTTPEAPALQALLAAMAEQRVDTVVMEVSSHALALGRVDGTRFAVGGFTNLSRDHLDFHPTMADYFEAKALLFDPNSPLRAHRAVVCIDDEAGREMAARAGDAVTVSAEGQPAHWRAVEVAPLGTGGQQFTVIDPAGVQHRAGIRLPGHYNVANCLVALALLDAVGVSPEQAAPGLLQTRVPGRMEEIDAGQDFLALVDYAHKPGALRAVLSSLKRPDRRLAVVFGAGGERDPGKRAPMGATAAELADLVVVTDDNPRGEDPAAIRREILAGATESGCAAEVIEIGDRRAAIRHAVAWAGPGDVVLVAGKGHETGQRTGEHTRPFDDRVELAEALREAVGPRKAQG.

Leu48 is a binding site for UDP-N-acetyl-alpha-D-muramoyl-L-alanyl-D-glutamate. An ATP-binding site is contributed by 134–140 (GTSGKTT). Residues 176 to 177 (TT), Ser203, and Arg211 each bind UDP-N-acetyl-alpha-D-muramoyl-L-alanyl-D-glutamate. An N6-carboxylysine modification is found at Lys243. Meso-2,6-diaminopimelate-binding positions include Arg405, 429-432 (DNPR), Gly483, and Glu487. Positions 429 to 432 (DNPR) match the Meso-diaminopimelate recognition motif motif.

Belongs to the MurCDEF family. MurE subfamily. The cofactor is Mg(2+). Carboxylation is probably crucial for Mg(2+) binding and, consequently, for the gamma-phosphate positioning of ATP.

Its subcellular location is the cytoplasm. It catalyses the reaction UDP-N-acetyl-alpha-D-muramoyl-L-alanyl-D-glutamate + meso-2,6-diaminopimelate + ATP = UDP-N-acetyl-alpha-D-muramoyl-L-alanyl-gamma-D-glutamyl-meso-2,6-diaminopimelate + ADP + phosphate + H(+). It participates in cell wall biogenesis; peptidoglycan biosynthesis. Catalyzes the addition of meso-diaminopimelic acid to the nucleotide precursor UDP-N-acetylmuramoyl-L-alanyl-D-glutamate (UMAG) in the biosynthesis of bacterial cell-wall peptidoglycan. The protein is UDP-N-acetylmuramoyl-L-alanyl-D-glutamate--2,6-diaminopimelate ligase of Mycobacterium avium (strain 104).